Here is a 3462-residue protein sequence, read N- to C-terminus: MFIKKKKKKVSSFEFSSLRSTFSFVHWAKLKHQTSSIIENHSDQISPIQIDFYNRPFEKGRLKALVSWSISYFGEKKTVDLVENLKSIGYAYATKAGISLGIDDLKIPPSKKDYITKAEQILEFTNQDVKKGYLTSIEYFSKVIETWNKTSESLKEEVISNFKKTDELNPVFIMAFSGARGNISQVRQLTSMRGLMSDPQGRIINFPIQSNFREGLTLTEYLISCYGARKGVVDTALRTATSGYLTRRLVDVAHHVIVRGFNCGTKKGLYLSDLKKGDKILLSLKNRIIGRRLAEDIYNSKKQLIATKNQEISSNLSSLITKNKTSIFVRSPLTCQDKNYVCQLCYGWSLANHRLVPSGEAIGIIAAQSIGEPGTQLTMRTFHTGGVFSGEVTDEIKAPFRGIVFFNTSIPGKLIRTTYGQIAFLTKQESFLTLIPENPKQQWLDSSKKLGFSKQKEPDFQKDSLFLQKKVEFKIPAYTLLFVKNNQLVEKNQVLGEASTFLTRQNQSIESYQTIYSEFSGEVKFQHSKGVQVLKKELDFKIDDQELSSVLKNKLRKLKSLFNPSANSSTGEFWILSAQKQTISKPVNLLVKPGDFLHQKALLYLAKKASYSNYFETIALDPSHNLPTLPLPILFYDFGVNSLAKNLNKNAFFNLALLNEQLYLRKGNLFLMQDRSTQKKANRSTIKILPSLQKQTLQNFKKVCSDLPFVSRSLFPISESSRDKLNSIQNGVKLQSTIVGKHRFLSLNIIFTQIAKKKFFKMNLNSEVKIKSLKQFDLNHESNEMKQIGVFNKDKTPTGGFGIQEIFYTSFESKLKTSPLFLLAQFSSDKTLIDLTKQNVQDFKFKNLNYQYFHPFLVLASDPPFCVSEKTLHFMQSCGQSLNEIDPNPKIETFFSKSAPSFLDKNRRNKRFKSLKKTMEKNHLLSLYYFLTQPLSDDNDDTIMNSFNRKSKLNKFSTKRLNKKQIVFGKLNHHFFADKGGDDFHFKNFIHGGLSFKEVCEVDLYLKERVEVFNWKIATLGTPVSDIITKAEKFVLFHSPTNACGSFILEQPLKNPCFYAFGKIGFLRGKTDYGQPNKIFSSNLFNLKKGWKTKTEGRFTNRPNKQKFKSFINSVEKSGPLNKKIFQNEGPFALNDFTKIQPIVGNQLNENFFTNAAELLKKRPGAAKQEFQLTSFLEKFINRHNRLFWFPKDQNILNFADQQSKGPTNLLFQRKFLKDLTLFSDGDPSFSCRSFVFQTKFYLSKKLFENLPRHNFENYDIISGPINFQEFEILQKIPFSFYPLSSRSTQKFGPFFILPREVTKKQSFQIFKYPLLFELKTYSPTFFSTVFFFIRNFGPKFHKKRERKLIKAIFRPLPRLIGFSTLKSPLDSGQTTTEKAGLQKPVYRFIKKSELFFSIFDYQILKNYRRLASNLILKQNGLNLLNYSPILNSLLKSALLFNIASAKKNSVFEKLGLKISAAYSESKTFGIATEKNSLNSNSVVLFQKKQSGFLIRELNPFHNTLGSPFFDRSKKVDNPQSSLTFDRPQSANERKQILKKARQKLRLFPLNLNEKKNRFSSVTLDLLRDQTTLHKMQSCGEAESGNLKTKETLFKKVKRENKKITEIFTFCPFCPQLKSKGKRKSKGDQLFQEPCNLNLGENFLSCLPFGFEYPVKARRRLVKEQRLPFSLSLILPDKLNYYQSLTSFPFSKQMGNRLLKNLTQLNFLNVGCIRLSQLDSKILRSDSFNPQRKELKSKKFNNFSINELSDSFMNLGWTGFSQKNLILKYLDTDQIFKKGGPLKSNLQDSQLVECFFKTKKVHFLFISKLLKESSLNSFFYNFYYSGSSFNSFADIQKFENKASFFQTKKKLYNFEKKDQWQKKMSFLFFIQNKKTHLFLPNSKGFFLKKKKDISCERFSTNVILSKSQSKNETKELKKASLANQNLKKHSTISTENALKNKMNQSFSFSHFNKEKKPLSDCRAQTKGAIQKFSTKLPPTQTGWIFAILNPKIYLNKHNCVEFAGNSNLSDISFDNYVTLTCFLTIRFVNTFFELHANVDFWLKTLNTFHLGLLKQSSFDFKASKIKLQKTPFLFPSFPPNYIELVFVKKAILRRVAKKDSTFCNLYSFENFLLDKRFQKFKTHFNLQSHLKLAPSFCVDLQGSKGLENFAWTGKLRSQSQASWILETNLFSPCFADKQSKSPLLEFENKKCPAFAKGKLQKSKIEKFEFTYNDIKNKLVYFNKSFFLTSDQRPVFQRSFPKKIHRKTLFITHPSIIWKSRFESSLKSLTFFKMKAKQNGTGSLSFFEKKSLETSLNKTSVLFKKVLAIKTFLLFSFSSLNLVSGKLNFLSSVDQNKKSNLKIQSIFENFAYQQSKGSNEINFSRSAALHSMQSFVFSEKLRKTLSLRISNFHKIQKYANQNLESGIGFFSFFQKSLSIVFFDSAYHFSPQNTSTKDSFEIKKENKTVINNYCRFSNFKLLKLPVFKNRFLNKYSLFKSFLNYLSYSFDVKTSKQILVRLPLLKETCFHFNKNSRFKPKLLILNQANSQQLLATCFVQPYSEFSNSSFVFNSKSAHLHSQTAVKHRQNFEKKSKIIFDERKTFSFISSSTQVLFVSKKATHYLNENFRSQNYKKKTYDFIDNANVLKNRFFERLSPVEFHRKREGFLSKDQKQMTFKYQNMQGGLIPALDSTSTFAPFARSSKARGSAKAIFSQAQRLWGEESFINDKQKSIRNQIIFAKNSRFKNLLILNNKNENEKLFYLNLKKKVSEQSTMNFFVPALYKKLFYTKQSISKFLEVKIQPNLQIQWTFFNSNISKHEKQQKFLLPLFDETFNIQGSNLKNGLNFGMLSLSYSTLDPFFECLKKRVNSSWFFNGKQTFKKKKKIAKEGAFFNHSFFLDAKKSKQLNKKIQKKFTKRLQTLNFSEIKKGFFISEKFKTRLSCLIKKPFLISTFFLSYRLKKPKLALNFNYQSLGNNSKKFSLIRLNSIDFNLSKSQRGWFHNQNVSKQFRFFKHNRSVNLFQIHFDFENSCDPCFAMQKQTTSSKPVLFLYNLKPLKTDFFQKGFQTTSQLLFKHINHSIVPLKDDANHLSSFLNQANFRGAFEPKAKTIADKLISQNVAITKPNLPKSNFSSLKGEVFFVTNSRQFKLVDLSVFKKSSREIQLLTNLDLITFRIKNRNFPSKHIEEQKPNLIEKQLAQSKNKLQIYIGQLLRYGKEISPGIGLNQSGQILILQSNKLVLRYAKPFLLASGGICDLVQGDFVKNQSPLLNLKYKSLKTEDIVQGIPKIEQLFEARENFQDELGINNLLKNKFLVYKTLYHPKEAVRKSFEFIQHYIIDGIQYVYQSQGVNISDKHIEIIVKQMTSKVRILEPRNSGLLRGDVVDLDWIERINLDILTGKKAQYEPIVLGITKASLDRRGFISAASFQETIKVLTKATILQRRDYLRGLKENVILGHLINSGTGSTLYSILKEKKSNFLNRFLQ.

The Zn(2+) site is built by C263, C335, C342, and C345. The tract at residues 541-1085 is insert-1; the sequence is KIDDQELSSV…PNKIFSSNLF (545 aa). Positions 1528 to 1585 are insert-2; sequence PQSANERKQILKKARQKLRLFPLNLNEKKNRFSSVTLDLLRDQTTLHKMQSCGEAESG. Residues 1602–1699 form an insert-3 region; that stretch reads KKITEIFTFC…FSKQMGNRLL (98 aa). Positions 1938-2168 are insert-4; the sequence is LKNKMNQSFS…SQASWILETN (231 aa). An insert-5 region spans residues 2320-2870; the sequence is NLVSGKLNFL…KKKIAKEGAF (551 aa). An insert-6 region spans residues 2972–3196; it reads SKSQRGWFHN…IGQLLRYGKE (225 aa).

Belongs to the RNA polymerase beta' chain family. RpoC2 subfamily. In terms of assembly, in plastids the minimal PEP RNA polymerase catalytic core is composed of four subunits: alpha, beta, beta', and beta''. When a (nuclear-encoded) sigma factor is associated with the core the holoenzyme is formed, which can initiate transcription. Zn(2+) is required as a cofactor.

Its subcellular location is the plastid. It is found in the chloroplast. It carries out the reaction RNA(n) + a ribonucleoside 5'-triphosphate = RNA(n+1) + diphosphate. In terms of biological role, DNA-dependent RNA polymerase catalyzes the transcription of DNA into RNA using the four ribonucleoside triphosphates as substrates. This Tupiella akineta (Green alga) protein is DNA-directed RNA polymerase subunit beta''.